The primary structure comprises 468 residues: Putative BTB/POZ domain and WD-repeat protein R154 (468 aa).

The region spanning 14–85 is the BTB domain; the sequence is SDLQLIVEDS…FYGIDDKLPE (72 aa). WD repeat units lie at residues 194–233, 354–398, and 401–440; these read HHSE…IIFN, DEIG…LVKS, and LFDV…IIYT.

The protein belongs to the mimivirus BTB/WD family.

This is Putative BTB/POZ domain and WD-repeat protein R154 from Acanthamoeba polyphaga (Amoeba).